Consider the following 148-residue polypeptide: Hemoglobin subunit beta (148 aa).

The region spanning 3-148 (DWTDAERSAI…VVSALGRQYH (146 aa)) is the Globin domain. 2 residues coordinate heme b: His-64 and His-93.

It belongs to the globin family. In terms of assembly, heterotetramer of two alpha chains and two beta chains. In terms of tissue distribution, red blood cells.

In terms of biological role, involved in oxygen transport from gills to the various peripheral tissues. The protein is Hemoglobin subunit beta (hbb) of Salmo salar (Atlantic salmon).